Consider the following 217-residue polypeptide: 3,4-dihydroxy-2-butanone 4-phosphate synthase (217 aa).

D-ribulose 5-phosphate contacts are provided by residues Arg37 to Glu38, Asp42, Arg150 to Thr154, and Glu174. Glu38 provides a ligand contact to Mg(2+). His153 contributes to the Mg(2+) binding site.

It belongs to the DHBP synthase family. As to quaternary structure, homodimer. It depends on Mg(2+) as a cofactor. Requires Mn(2+) as cofactor.

It catalyses the reaction D-ribulose 5-phosphate = (2S)-2-hydroxy-3-oxobutyl phosphate + formate + H(+). It participates in cofactor biosynthesis; riboflavin biosynthesis; 2-hydroxy-3-oxobutyl phosphate from D-ribulose 5-phosphate: step 1/1. Functionally, catalyzes the conversion of D-ribulose 5-phosphate to formate and 3,4-dihydroxy-2-butanone 4-phosphate. The sequence is that of 3,4-dihydroxy-2-butanone 4-phosphate synthase from Syntrophotalea carbinolica (strain DSM 2380 / NBRC 103641 / GraBd1) (Pelobacter carbinolicus).